We begin with the raw amino-acid sequence, 148 residues long: UPF0179 protein VNG_1401C (148 aa).

This sequence belongs to the UPF0179 family.

This Halobacterium salinarum (strain ATCC 700922 / JCM 11081 / NRC-1) (Halobacterium halobium) protein is UPF0179 protein VNG_1401C.